Here is an 805-residue protein sequence, read N- to C-terminus: Ubiquitin carboxyl-terminal hydrolase 5 (805 aa).

The Rhodanese domain occupies 159–283 (HGDALLLIDV…WVKLGGAYQS (125 aa)). The tract at residues 359–380 (RNSPTVQKFSPHPPTTLSKLNT) is disordered. Residues 446 to 804 (VGLENIGNCC…SAYVLFYERI (359 aa)) form the USP domain. Catalysis depends on Cys455, which acts as the Nucleophile. The Proton acceptor role is filled by His761.

The protein belongs to the peptidase C19 family.

The catalysed reaction is Thiol-dependent hydrolysis of ester, thioester, amide, peptide and isopeptide bonds formed by the C-terminal Gly of ubiquitin (a 76-residue protein attached to proteins as an intracellular targeting signal).. The chain is Ubiquitin carboxyl-terminal hydrolase 5 (UBP5) from Saccharomyces cerevisiae (strain ATCC 204508 / S288c) (Baker's yeast).